A 264-amino-acid chain; its full sequence is Putative hydro-lyase Psyr_0498 (264 aa).

This sequence belongs to the D-glutamate cyclase family.

In Pseudomonas syringae pv. syringae (strain B728a), this protein is Putative hydro-lyase Psyr_0498.